Reading from the N-terminus, the 72-residue chain is Large ribosomal subunit protein bL28 (72 aa).

It belongs to the bacterial ribosomal protein bL28 family.

The polypeptide is Large ribosomal subunit protein bL28 (Chlorobium limicola (strain DSM 245 / NBRC 103803 / 6330)).